The following is a 269-amino-acid chain: Ribosomal RNA small subunit methyltransferase J (269 aa).

S-adenosyl-L-methionine-binding positions include 125–126 and D179; that span reads ER.

It belongs to the methyltransferase superfamily. RsmJ family.

It localises to the cytoplasm. It carries out the reaction guanosine(1516) in 16S rRNA + S-adenosyl-L-methionine = N(2)-methylguanosine(1516) in 16S rRNA + S-adenosyl-L-homocysteine + H(+). Its function is as follows. Specifically methylates the guanosine in position 1516 of 16S rRNA. This chain is Ribosomal RNA small subunit methyltransferase J, found in Pseudomonas syringae pv. syringae (strain B728a).